The primary structure comprises 212 residues: ATP-dependent Clp protease proteolytic subunit (212 aa).

The active-site Nucleophile is Ser-113. Residue His-138 is part of the active site.

Belongs to the peptidase S14 family. Fourteen ClpP subunits assemble into 2 heptameric rings which stack back to back to give a disk-like structure with a central cavity, resembling the structure of eukaryotic proteasomes.

It is found in the cytoplasm. The enzyme catalyses Hydrolysis of proteins to small peptides in the presence of ATP and magnesium. alpha-casein is the usual test substrate. In the absence of ATP, only oligopeptides shorter than five residues are hydrolyzed (such as succinyl-Leu-Tyr-|-NHMec, and Leu-Tyr-Leu-|-Tyr-Trp, in which cleavage of the -Tyr-|-Leu- and -Tyr-|-Trp bonds also occurs).. Its function is as follows. Cleaves peptides in various proteins in a process that requires ATP hydrolysis. Has a chymotrypsin-like activity. Plays a major role in the degradation of misfolded proteins. The chain is ATP-dependent Clp protease proteolytic subunit from Saccharophagus degradans (strain 2-40 / ATCC 43961 / DSM 17024).